The primary structure comprises 200 residues: Large ribosomal subunit protein bL25 (200 aa).

Belongs to the bacterial ribosomal protein bL25 family. CTC subfamily. As to quaternary structure, part of the 50S ribosomal subunit; part of the 5S rRNA/L5/L18/L25 subcomplex. Contacts the 5S rRNA. Binds to the 5S rRNA independently of L5 and L18.

This is one of the proteins that binds to the 5S RNA in the ribosome where it forms part of the central protuberance. This is Large ribosomal subunit protein bL25 from Nocardia farcinica (strain IFM 10152).